Consider the following 132-residue polypeptide: Small ribosomal subunit protein uS8 (132 aa).

It belongs to the universal ribosomal protein uS8 family. Part of the 30S ribosomal subunit. Contacts proteins S5 and S12.

Its function is as follows. One of the primary rRNA binding proteins, it binds directly to 16S rRNA central domain where it helps coordinate assembly of the platform of the 30S subunit. The polypeptide is Small ribosomal subunit protein uS8 (Xanthobacter autotrophicus (strain ATCC BAA-1158 / Py2)).